A 512-amino-acid polypeptide reads, in one-letter code: D-alanine--D-alanyl carrier protein ligase (512 aa).

An ATP-binding site is contributed by 152 to 153 (TS). Asp199 contacts D-alanine. 294–299 (NAYGPT) contacts ATP. D-alanine is bound at residue Val303. ATP-binding positions include Asp385, 397 to 400 (YGGR), and Lys499. Lys499 lines the D-alanine pocket.

The protein belongs to the ATP-dependent AMP-binding enzyme family. DltA subfamily.

Its subcellular location is the cytoplasm. It carries out the reaction holo-[D-alanyl-carrier protein] + D-alanine + ATP = D-alanyl-[D-alanyl-carrier protein] + AMP + diphosphate. The protein operates within cell wall biogenesis; lipoteichoic acid biosynthesis. Functionally, catalyzes the first step in the D-alanylation of lipoteichoic acid (LTA), the activation of D-alanine and its transfer onto the D-alanyl carrier protein (Dcp) DltC. In an ATP-dependent two-step reaction, forms a high energy D-alanyl-AMP intermediate, followed by transfer of the D-alanyl residue as a thiol ester to the phosphopantheinyl prosthetic group of the Dcp. D-alanylation of LTA plays an important role in modulating the properties of the cell wall in Gram-positive bacteria, influencing the net charge of the cell wall. The chain is D-alanine--D-alanyl carrier protein ligase from Streptococcus pyogenes serotype M18 (strain MGAS8232).